The chain runs to 494 residues: MDYKMDGYLDQQVPYTLANRSQGNGPLNRLLMATKRKYMDAELPPQESEDLFQDLSQLQETWLTEAQVPDSDEQFVPDFHSENSVAFHSPPVKIKKEPQSPGSDPSQSCSHKQSFSYPNGEQCLYASAYEQKRAAVAGAGGSKSSCPATPMSPMQHYSPKPTVGTRQESGYMNPPSSSQSHACHSHSYPMNPSSRFPSGSAEMCPPFASQGQALQRIDPAHASGGGGGGYHRQHSDPCLPYPPQQTFKQEYMDPLYDRAAHINGPQPQRFPPAHMMVKQEPTDYTYEPDVPGCPSMYHHNEGYSNPQHNSEGYMFENDSRVVPEKFEGEVKQEGGSVFREGAPYQRRGSLQLWQFLVALLDDPSNAHFIAWTGRGMEFKLIEPEEVARLWGIEKNRPAMNYDKLSRSLRYYYEKGIMQKVAGERYVYKFVCEPEALITLAFPDNQRPSLKAEFERYVNEEDTVPLSHLDEGVSYPPEPAATNMGPQPYSKGYMY.

2 disordered regions span residues 82–113 and 139–201; these read ENSV…SHKQ and AGGS…SGSA. Over residues 100–113 the composition is skewed to polar residues; sequence SPGSDPSQSCSHKQ. The span at 176 to 187 shows a compositional bias: low complexity; the sequence is SSSQSHACHSHS. A compositionally biased stretch (polar residues) spans 188-197; the sequence is YPMNPSSRFP. The segment at residues 350–430 is a DNA-binding region (ETS); the sequence is LQLWQFLVAL…AGERYVYKFV (81 aa).

It belongs to the ETS family. Post-translationally, phosphorylated. In the embryo, expressed ubiquitously until the late blastula stage, in the marginal zone of gastrula stages, in the presumptive forebrain and hindbrain and in the trunk region of early somite stages. In later stages, also expressed in Rohon-Beard neurons, epiphysis, lateral line placodes, pectoral fin buds, developing lens and heart.

It is found in the nucleus. Its function is as follows. Transcriptional activator that binds to the (5'-CCGGA[AT]-3') motif. May control the acquisition of specific cell fates at an early stage during development of the somites and nervous system. May mediate the cellular effects of the fibroblast growth factors on embryogenesis. The sequence is that of ETS translocation variant 4 (etv4) from Danio rerio (Zebrafish).